The sequence spans 842 residues: MSRPLTDQEKRKQISVRGLAGVENVTELKKNFNRHLHFTLVKDRNVATPRDYYFALAYTVRDHLVGRWIRTQQHYYEKDPKRIYYLSLEFYIGRTLQNTMVNLALENACDEATYQLGLDMEELEEIEEDAGLGNGGLGRLAACFLDSMATLGLAAYGYGIRYEFGIFNQKISGGWQMEEADDWLRYGNPWEKARPEFTLPVHFYGRVEHTSQGAKWVDTQVVLAMPYDTPVPGYRNNVVNTMRLWSAKAPNDFNLKDFNVGGYIQAVLDRNLAENISRVLYPNDNFFEGKELRLKQEYFVVAATLQDIIRRFKSSKFGCLDPVRTNFDAFPDKVAIQLNDTHPSLAIPELMRILVDQERLEWEKAWEVTVKTCAYTNHTVLPEALERWPVHLIETLLPRHLQIIYEINQRFLNRVAAAFPGDVDRLRRMSLVEEGAVKRINMAHLCIAGSHAVNGVARIHSEILKKTIFKDFYELEPHKFQNKTNGITPRRWLVMCNPGLAEIIAERIGEEYIADLDQLRKLLSYVDDESFIRDVAKVKQENKLKFSAYLEKEYKVHINPNSLFDIQVKRIHEYKRQLLNCLHVITLYNRIKKEPNKFFVPRTVMIGGKAAPGYHMAKMIIKLITAIGDVVNHDPVVGDRLRVIFLENYRVSLAEKVIPAADLSEQISTAGTEASGTGNMKFMLNGALTIGTMDGANVEMAEEAGEENFFIFGMRVEDVERLDQKGYNAQEYYDRIPELRHVIDQLSSGFFSPKQPDLFKDIVNMLMHHDRFKVFADYEEYIKCQERVSALYKNPREWTRMVIRNIATSGKFSSDRTIAQYAREIWGVEPTRQRMPAPDEKI.

Ser2 is modified (N-acetylserine). Ser15 carries the phosphoserine; by PHK; in form phosphorylase A modification. AMP contacts are provided by Asp43 and Tyr76. A phosphotyrosine mark is found at Tyr204 and Tyr227. 310-319 (RRFKSSKFGC) contacts AMP. Ser430 bears the Phosphoserine mark. At Tyr473 the chain carries Phosphotyrosine. At Lys681 the chain carries N6-(pyridoxal phosphate)lysine. A phosphoserine mark is found at Ser747 and Ser748.

It belongs to the glycogen phosphorylase family. As to quaternary structure, homodimer. Homotetramer; to form the enzymatically active phosphorylase A. Pyridoxal 5'-phosphate is required as a cofactor. In terms of processing, phosphorylation of Ser-15 converts phosphorylase B (unphosphorylated) to phosphorylase A.

The catalysed reaction is [(1-&gt;4)-alpha-D-glucosyl](n) + phosphate = [(1-&gt;4)-alpha-D-glucosyl](n-1) + alpha-D-glucose 1-phosphate. Its activity is regulated as follows. Allosterically regulated through the non-covalent binding of metabolites, being activated by AMP and inhibited by ATP, ADP, and glucose-6-phosphate. The activity is also controlled by post-translational modifications including phosphorylation. Allosteric enzyme that catalyzes the rate-limiting step in glycogen catabolism, the phosphorolytic cleavage of glycogen to produce glucose-1-phosphate, and plays a central role in maintaining cellular and organismal glucose homeostasis. The chain is Glycogen phosphorylase, muscle form from Bos taurus (Bovine).